The chain runs to 1155 residues: ATP-dependent helicase/deoxyribonuclease subunit B (1155 aa).

The region spanning 1–278 is the UvrD-like helicase ATP-binding domain; sequence MSQLNAYIGR…FTKQERFENR (278 aa). 9–16 lines the ATP pocket; the sequence is GRAGTGKS. The 315-residue stretch at 270–584 folds into the UvrD-like helicase C-terminal domain; it reads TKQERFENRD…SIGSMDLAKV (315 aa). [4Fe-4S] cluster-binding residues include C785, C1112, C1115, and C1121.

This sequence belongs to the helicase family. AddB/RexB type 1 subfamily. Heterodimer of AddA and AddB. Mg(2+) is required as a cofactor. The cofactor is [4Fe-4S] cluster.

Its function is as follows. The heterodimer acts as both an ATP-dependent DNA helicase and an ATP-dependent, dual-direction single-stranded exonuclease. Recognizes the chi site generating a DNA molecule suitable for the initiation of homologous recombination. The AddB subunit has 5' -&gt; 3' nuclease activity but not helicase activity. The chain is ATP-dependent helicase/deoxyribonuclease subunit B from Staphylococcus carnosus (strain TM300).